A 319-amino-acid polypeptide reads, in one-letter code: Phospho-N-acetylmuramoyl-pentapeptide-transferase (319 aa).

10 consecutive transmembrane segments (helical) span residues 1-21 (MSILVAGLTLVSAFLITFLLM), 53-73 (TMGGLLFILSAALTCGWVGAW), 77-97 (LNGTLGALLFTLIAYGLIGMW), 117-137 (FLAQVVGAMVFAVIYQHEGFQ), 140-160 (FGLTDWGWFYALFIIFWMVGF), 172-192 (GLVTGLATISFAAYLVLALVQ), 195-215 (TEVALFCLAMIGTLLGFFPFN), 221-241 (IFMGDMGSLALGASLAAVALV), 249-269 (LIIGIVYVLETLSVILQVAYF), and 298-318 (GVFWLVGLIAGALTVATILFL).

Belongs to the glycosyltransferase 4 family. MraY subfamily. It depends on Mg(2+) as a cofactor.

It is found in the cell membrane. The enzyme catalyses UDP-N-acetyl-alpha-D-muramoyl-L-alanyl-gamma-D-glutamyl-L-lysyl-D-alanyl-D-alanine + di-trans,octa-cis-undecaprenyl phosphate = Mur2Ac(oyl-L-Ala-gamma-D-Glu-L-Lys-D-Ala-D-Ala)-di-trans,octa-cis-undecaprenyl diphosphate + UMP. It functions in the pathway cell wall biogenesis; peptidoglycan biosynthesis. Functionally, catalyzes the initial step of the lipid cycle reactions in the biosynthesis of the cell wall peptidoglycan: transfers peptidoglycan precursor phospho-MurNAc-pentapeptide from UDP-MurNAc-pentapeptide onto the lipid carrier undecaprenyl phosphate, yielding undecaprenyl-pyrophosphoryl-MurNAc-pentapeptide, known as lipid I. The polypeptide is Phospho-N-acetylmuramoyl-pentapeptide-transferase (Limosilactobacillus fermentum (strain NBRC 3956 / LMG 18251) (Lactobacillus fermentum)).